A 208-amino-acid chain; its full sequence is Adenylate kinase (208 aa).

10–15 (GAGKGT) is a binding site for ATP. An NMP region spans residues 30–59 (STGEMLRAAVAAGTPVGLKAKDVMASGGLV). AMP-binding positions include Thr-31, Arg-36, 57–59 (GLV), 85–88 (GFPR), and Gln-92. Positions 126–142 (SRVAEMTARGEQVRADD) are LID. An ATP-binding site is contributed by Arg-127. The AMP site is built by Arg-139 and Arg-150. Residue Met-178 participates in ATP binding.

This sequence belongs to the adenylate kinase family. Monomer.

The protein localises to the cytoplasm. It carries out the reaction AMP + ATP = 2 ADP. It participates in purine metabolism; AMP biosynthesis via salvage pathway; AMP from ADP: step 1/1. Catalyzes the reversible transfer of the terminal phosphate group between ATP and AMP. Plays an important role in cellular energy homeostasis and in adenine nucleotide metabolism. This is Adenylate kinase from Nitrobacter hamburgensis (strain DSM 10229 / NCIMB 13809 / X14).